Here is a 467-residue protein sequence, read N- to C-terminus: Coiled-coil domain-containing protein 174 (467 aa).

2 disordered regions span residues 47 to 76 (INKK…LEEQ) and 129 to 163 (GATR…SEEW). Basic and acidic residues predominate over residues 64 to 76 (RAEKDAEQKLEEQ). Residues 64 to 99 (RAEKDAEQKLEEQKTLDKAREKLEEKAKLYEKMTKG) adopt a coiled-coil conformation. Acidic residues predominate over residues 136–147 (IEEERDDDDKEE). Ser-198 is modified (phosphoserine). Residues 268-310 (LEMLREQTTDQRIKRENIKEKRKAMLEARLAKLRQKKMKKSKE) adopt a coiled-coil conformation. Disordered stretches follow at residues 301–365 (RQKK…IREW) and 379–454 (KQSE…VTFQ). 2 stretches are compositionally biased toward basic and acidic residues: residues 349 to 365 (IQER…IREW) and 379 to 390 (KQSELRAERDPE). The segment covering 406–415 (PMSSQPQSRP) has biased composition (polar residues). Over residues 423-446 (GHSSGQSQEPSSSHTSTPASESSP) the composition is skewed to low complexity.

It is found in the nucleus. Functionally, probably involved in neuronal development. In Mus musculus (Mouse), this protein is Coiled-coil domain-containing protein 174 (Ccdc174).